Reading from the N-terminus, the 777-residue chain is Acyl-homoserine lactone acylase PvdQ (777 aa).

An N-terminal signal peptide occupies residues 1–25 (MIISRQLPSFCLAALFLSFSGGAHA). A propeptide spans 196 to 218 (AGLPAEHWQLAAARQQRFALDRG) (spacer peptide). Serine 219 (nucleophile) is an active-site residue.

This sequence belongs to the peptidase S45 family. Heterodimer of an alpha subunit and a beta subunit processed from the same precursor.

The protein resides in the periplasm. It carries out the reaction an N-acyl-L-homoserine lactone + H2O = L-homoserine lactone + a carboxylate. Functionally, catalyzes the deacylation of acyl-homoserine lactone (AHL or acyl-HSL), releasing homoserine lactone (HSL) and the corresponding fatty acid. Possesses a specificity for the degradation of long-chain acyl-HSLs (side chains of 11 to 14 carbons in length). This Pseudomonas fluorescens (strain ATCC BAA-477 / NRRL B-23932 / Pf-5) protein is Acyl-homoserine lactone acylase PvdQ (pvdQ).